A 121-amino-acid polypeptide reads, in one-letter code: Holo-[acyl-carrier-protein] synthase (121 aa).

Mg(2+)-binding residues include Asp8 and Glu58.

This sequence belongs to the P-Pant transferase superfamily. AcpS family. The cofactor is Mg(2+).

The protein resides in the cytoplasm. It carries out the reaction apo-[ACP] + CoA = holo-[ACP] + adenosine 3',5'-bisphosphate + H(+). In terms of biological role, transfers the 4'-phosphopantetheine moiety from coenzyme A to a Ser of acyl-carrier-protein. This chain is Holo-[acyl-carrier-protein] synthase, found in Bacillus velezensis (strain DSM 23117 / BGSC 10A6 / LMG 26770 / FZB42) (Bacillus amyloliquefaciens subsp. plantarum).